The following is a 421-amino-acid chain: Gamma-glutamyl phosphate reductase (421 aa).

The protein belongs to the gamma-glutamyl phosphate reductase family.

Its subcellular location is the cytoplasm. The catalysed reaction is L-glutamate 5-semialdehyde + phosphate + NADP(+) = L-glutamyl 5-phosphate + NADPH + H(+). Its pathway is amino-acid biosynthesis; L-proline biosynthesis; L-glutamate 5-semialdehyde from L-glutamate: step 2/2. Its function is as follows. Catalyzes the NADPH-dependent reduction of L-glutamate 5-phosphate into L-glutamate 5-semialdehyde and phosphate. The product spontaneously undergoes cyclization to form 1-pyrroline-5-carboxylate. The sequence is that of Gamma-glutamyl phosphate reductase from Brucella suis biovar 1 (strain 1330).